We begin with the raw amino-acid sequence, 208 residues long: MEAPPVTMMPVTGGTINMMEYLLQGSVLDHSLESLIHRLRGLCDNMEPETFLDHEMVFLLKGQQASPFVLRARRSMDRAGAPWHLRYLGQPEMGDKNRHALVRNCVDIATSENLTDFLMEMGFRMDHEFVAKGHLFRKGIMKVVVYKIFRILVPGNTDSTEALSLSYLVELSVVAPAGQDMVSDDMRNFAEQLKPLVHLEKIDPKRLM.

At Ser-66 the chain carries Phosphoserine.

This sequence belongs to the Mediator complex subunit 18 family. In terms of assembly, component of the Mediator complex, which is composed of MED1, MED4, MED6, MED7, MED8, MED9, MED10, MED11, MED12, MED13, MED13L, MED14, MED15, MED16, MED17, MED18, MED19, MED20, MED21, MED22, MED23, MED24, MED25, MED26, MED27, MED29, MED30, MED31, CCNC, CDK8 and CDC2L6/CDK11. The MED12, MED13, CCNC and CDK8 subunits form a distinct module termed the CDK8 module. Mediator containing the CDK8 module is less active than Mediator lacking this module in supporting transcriptional activation. Individual preparations of the Mediator complex lacking one or more distinct subunits have been variously termed ARC, CRSP, DRIP, PC2, SMCC and TRAP.

It localises to the nucleus. Component of the Mediator complex, a coactivator involved in the regulated transcription of nearly all RNA polymerase II-dependent genes. Mediator functions as a bridge to convey information from gene-specific regulatory proteins to the basal RNA polymerase II transcription machinery. Mediator is recruited to promoters by direct interactions with regulatory proteins and serves as a scaffold for the assembly of a functional preinitiation complex with RNA polymerase II and the general transcription factors. The chain is Mediator of RNA polymerase II transcription subunit 18 (Med18) from Mus musculus (Mouse).